The primary structure comprises 89 residues: Large ribosomal subunit protein bL27 (89 aa).

The segment at M1–S26 is disordered.

It belongs to the bacterial ribosomal protein bL27 family.

The sequence is that of Large ribosomal subunit protein bL27 from Orientia tsutsugamushi (strain Ikeda) (Rickettsia tsutsugamushi).